The sequence spans 148 residues: 3-hydroxyacyl-[acyl-carrier-protein] dehydratase FabZ (148 aa).

Residue H50 is part of the active site.

Belongs to the thioester dehydratase family. FabZ subfamily.

Its subcellular location is the cytoplasm. The enzyme catalyses a (3R)-hydroxyacyl-[ACP] = a (2E)-enoyl-[ACP] + H2O. Functionally, involved in unsaturated fatty acids biosynthesis. Catalyzes the dehydration of short chain beta-hydroxyacyl-ACPs and long chain saturated and unsaturated beta-hydroxyacyl-ACPs. The chain is 3-hydroxyacyl-[acyl-carrier-protein] dehydratase FabZ from Levilactobacillus brevis (strain ATCC 367 / BCRC 12310 / CIP 105137 / JCM 1170 / LMG 11437 / NCIMB 947 / NCTC 947) (Lactobacillus brevis).